The following is a 208-amino-acid chain: NAD(P)H dehydrogenase (quinone) (208 aa).

The Flavodoxin-like domain occupies V4–V199. FMN-binding positions include S10–T15 and T87–Y89. W107 contributes to the substrate binding site. FMN is bound by residues S122–G128 and H143.

This sequence belongs to the WrbA family. FMN serves as cofactor.

It carries out the reaction a quinone + NADH + H(+) = a quinol + NAD(+). The catalysed reaction is a quinone + NADPH + H(+) = a quinol + NADP(+). In Methanosarcina barkeri (strain Fusaro / DSM 804), this protein is NAD(P)H dehydrogenase (quinone).